Consider the following 1131-residue polypeptide: Translation initiation factor IF-2 (1131 aa).

The segment at 49-542 (KFKGSVSSNE…AFIMPKPQQS (494 aa)) is disordered. Over residues 60–75 (KSIDNGKASRVEKPEK) the composition is skewed to basic and acidic residues. 2 stretches are compositionally biased toward polar residues: residues 76–88 (NNSVTAKADQTPS) and 108–125 (SEQNVTTGSTESEDNIQS). Residues 127-138 (GDRKYQHTDRRP) show a composition bias toward basic and acidic residues. Polar residues predominate over residues 139–152 (QGNNGEGPQTSTNS). Composition is skewed to basic and acidic residues over residues 164-180 (GDRRPQGQNSGDRRPYN) and 223-239 (GDRRPQGQNSGDRRPYN). Residues 411–436 (GQGGYGGRPQGQGSYGGRPQGQGGYA) show a composition bias toward gly residues. 2 stretches are compositionally biased toward basic and acidic residues: residues 450–479 (KDFDKDKDSGYTRSFDKKRTDPKSGEKSSI) and 487–530 (LTKE…DPNR). One can recognise a tr-type G domain in the interval 632–801 (KRPPVVCVMG…ILTAEMGELK (170 aa)). Residues 641–648 (GHVDHGKT) form a G1 region. 641 to 648 (GHVDHGKT) provides a ligand contact to GTP. Residues 666–670 (GITQH) are G2. Residues 687 to 690 (DTPG) are G3. Residues 687–691 (DTPGH) and 741–744 (NKID) contribute to the GTP site. Residues 741–744 (NKID) form a G4 region. Residues 777 to 779 (SAH) are G5.

It belongs to the TRAFAC class translation factor GTPase superfamily. Classic translation factor GTPase family. IF-2 subfamily.

The protein resides in the cytoplasm. Functionally, one of the essential components for the initiation of protein synthesis. Protects formylmethionyl-tRNA from spontaneous hydrolysis and promotes its binding to the 30S ribosomal subunits. Also involved in the hydrolysis of GTP during the formation of the 70S ribosomal complex. The protein is Translation initiation factor IF-2 of Lachnoclostridium phytofermentans (strain ATCC 700394 / DSM 18823 / ISDg) (Clostridium phytofermentans).